A 164-amino-acid polypeptide reads, in one-letter code: Dehydrin Rab16C (164 aa).

Over residues 42–51 (MGGHHAGAGG) the composition is skewed to gly residues. The segment at 42–164 (MGGHHAGAGG…KIKEKLPGQH (123 aa)) is disordered. The segment covering 105–115 (GNNQQQQQMMG) has biased composition (low complexity). Over residues 128 to 138 (GMTGAGTGTGV) the composition is skewed to gly residues. Residues 147–164 (GEKKGFMDKIKEKLPGQH) show a composition bias toward basic and acidic residues.

It belongs to the plant dehydrin family.

This chain is Dehydrin Rab16C (RAB16C), found in Oryza sativa subsp. japonica (Rice).